Here is a 404-residue protein sequence, read N- to C-terminus: ORC1-type DNA replication protein 2 (404 aa).

ATP-binding positions include 64-68 (TGKTS), tyrosine 205, and arginine 217.

It belongs to the CDC6/cdc18 family. As to quaternary structure, interacts with MCM.

Its function is as follows. Involved in regulation of DNA replication. Stimulates the helicase activity of MCM via stimulation of its ATPase activity. Binding to MCM may result in conformational changes in MCM, leading to catalytic ATP hydrolysis by the helicase. Directly stimulates MCM movement along single-stranded and double-stranded DNA. Does not bind DNA. The protein is ORC1-type DNA replication protein 2 (cdc6-2) of Thermoplasma acidophilum (strain ATCC 25905 / DSM 1728 / JCM 9062 / NBRC 15155 / AMRC-C165).